Consider the following 241-residue polypeptide: MAPK phosphothreonine lyase (241 aa).

His106 functions as the Proton donor in the catalytic mechanism. The Proton acceptor role is filled by Lys136.

This sequence belongs to the phosphothreonine lyase family.

It localises to the secreted. In terms of biological role, secreted effector that irreversibly inactivates host MAP kinases by catalyzing the dephosphorylation of the phosphothreonine residue in the pT-X-pY motif present in MAPKs, via a beta-elimination reaction leading to a dehydrobutyrine residue. This Salmonella choleraesuis (strain SC-B67) protein is MAPK phosphothreonine lyase (spvC).